The following is a 331-amino-acid chain: Ketol-acid reductoisomerase (NADP(+)) (331 aa).

Residues 2-182 (AKVYYDEDAN…GGTKGGVLET (181 aa)) enclose the KARI N-terminal Rossmann domain. NADP(+) is bound by residues 25-28 (YGSQ), serine 51, serine 53, and 83-86 (DEKQ). The active site involves histidine 108. An NADP(+)-binding site is contributed by glycine 134. The region spanning 183–328 (TFKDETETDL…VELRAMMPWL (146 aa)) is the KARI C-terminal knotted domain. Positions 191, 195, 227, and 231 each coordinate Mg(2+). Serine 252 lines the substrate pocket.

It belongs to the ketol-acid reductoisomerase family. Mg(2+) is required as a cofactor.

The catalysed reaction is (2R)-2,3-dihydroxy-3-methylbutanoate + NADP(+) = (2S)-2-acetolactate + NADPH + H(+). It catalyses the reaction (2R,3R)-2,3-dihydroxy-3-methylpentanoate + NADP(+) = (S)-2-ethyl-2-hydroxy-3-oxobutanoate + NADPH + H(+). It functions in the pathway amino-acid biosynthesis; L-isoleucine biosynthesis; L-isoleucine from 2-oxobutanoate: step 2/4. It participates in amino-acid biosynthesis; L-valine biosynthesis; L-valine from pyruvate: step 2/4. Its function is as follows. Involved in the biosynthesis of branched-chain amino acids (BCAA). Catalyzes an alkyl-migration followed by a ketol-acid reduction of (S)-2-acetolactate (S2AL) to yield (R)-2,3-dihydroxy-isovalerate. In the isomerase reaction, S2AL is rearranged via a Mg-dependent methyl migration to produce 3-hydroxy-3-methyl-2-ketobutyrate (HMKB). In the reductase reaction, this 2-ketoacid undergoes a metal-dependent reduction by NADPH to yield (R)-2,3-dihydroxy-isovalerate. The polypeptide is Ketol-acid reductoisomerase (NADP(+)) (Clostridium novyi (strain NT)).